The primary structure comprises 171 residues: Photosystem I assembly protein Ycf3 (171 aa).

TPR repeat units follow at residues 35 to 68, 72 to 105, and 120 to 153; these read AFTY…EVDA, SYIL…NPYL, and GEQA…APTN.

It belongs to the Ycf3 family.

The protein localises to the plastid. Its subcellular location is the chloroplast thylakoid membrane. Functionally, essential for the assembly of the photosystem I (PSI) complex. May act as a chaperone-like factor to guide the assembly of the PSI subunits. The chain is Photosystem I assembly protein Ycf3 from Nephroselmis olivacea (Green alga).